A 335-amino-acid polypeptide reads, in one-letter code: Histidinol-phosphate aminotransferase (335 aa).

Lys-202 carries the post-translational modification N6-(pyridoxal phosphate)lysine.

It belongs to the class-II pyridoxal-phosphate-dependent aminotransferase family. Histidinol-phosphate aminotransferase subfamily. As to quaternary structure, homodimer. Pyridoxal 5'-phosphate is required as a cofactor.

The enzyme catalyses L-histidinol phosphate + 2-oxoglutarate = 3-(imidazol-4-yl)-2-oxopropyl phosphate + L-glutamate. It participates in amino-acid biosynthesis; L-histidine biosynthesis; L-histidine from 5-phospho-alpha-D-ribose 1-diphosphate: step 7/9. This chain is Histidinol-phosphate aminotransferase, found in Thermotoga sp. (strain RQ2).